Reading from the N-terminus, the 324-residue chain is Nucleotide-binding protein GbCGDNIH1_0395 (324 aa).

Residue 14 to 21 coordinates ATP; that stretch reads GLSGAGKS. 59–62 contacts GTP; sequence DARS. Residues 286–324 form a disordered region; it reads ISDDAPQAGAARVSTDDRNGRPEEHGSAQAPDELSRTTS. Positions 299–311 are enriched in basic and acidic residues; it reads STDDRNGRPEEHG.

Belongs to the RapZ-like family.

In terms of biological role, displays ATPase and GTPase activities. This chain is Nucleotide-binding protein GbCGDNIH1_0395, found in Granulibacter bethesdensis (strain ATCC BAA-1260 / CGDNIH1).